A 297-amino-acid polypeptide reads, in one-letter code: 33 kDa chaperonin (297 aa).

Cystine bridges form between cysteine 232–cysteine 234 and cysteine 266–cysteine 269.

Belongs to the HSP33 family. In terms of processing, under oxidizing conditions two disulfide bonds are formed involving the reactive cysteines. Under reducing conditions zinc is bound to the reactive cysteines and the protein is inactive.

Its subcellular location is the cytoplasm. Redox regulated molecular chaperone. Protects both thermally unfolding and oxidatively damaged proteins from irreversible aggregation. Plays an important role in the bacterial defense system toward oxidative stress. In Pseudomonas paraeruginosa (strain DSM 24068 / PA7) (Pseudomonas aeruginosa (strain PA7)), this protein is 33 kDa chaperonin.